The primary structure comprises 421 residues: DNA (cytosine-5)-methyltransferase 3-like (421 aa).

Polar residues predominate over residues 1 to 14; that stretch reads MGSRETPSSCSKTL. Residues 1-39 are disordered; it reads MGSRETPSSCSKTLETLDLETSDSSSPDADSPLEEQWLK. Positions 75–207 constitute an ADD domain; sequence EVKVNRRSIE…LKAFHDQEGA (133 aa). The GATA-type; atypical zinc finger occupies 86–116; that stretch reads ICLCCGTLQVYTRHPLFEGGLCAPCKDKFLE. A PHD-type; atypical zinc finger spans residues 127 to 183; it reads QSYCTICCSGGTLFICESPDCTRCYCFECVDILVGPGTSERINAMACWVCFLCLPFS.

As to quaternary structure, homodimer. Heterotetramer composed of 1 DNMT3A homodimer and 2 DNMT3L subunits (DNMT3L-DNMT3A-DNMT3A-DNMT3L). Interacts with histone H3 (via N-terminus); interaction is strongly inhibited by methylation at lysine 4 (H3K4me). Interacts with EZH2; the interaction is direct. Interacts with SPOCD1. As to expression, expressed in testis, thymus, ovary, and heart.

It is found in the nucleus. Catalytically inactive regulatory factor of DNA methyltransferases that can either promote or inhibit DNA methylation depending on the context. Essential for the function of DNMT3A and DNMT3B: activates DNMT3A and DNMT3B by binding to their catalytic domain. Acts by accelerating the binding of DNA and S-adenosyl-L-methionine (AdoMet) to the methyltransferases and dissociates from the complex after DNA binding to the methyltransferases. Recognizes unmethylated histone H3 lysine 4 (H3K4me0) and induces de novo DNA methylation by recruitment or activation of DNMT3. Plays a key role in embryonic stem cells and germ cells. In germ cells, required for the methylation of imprinted loci together with DNMT3A. In male germ cells, specifically required to methylate retrotransposons, preventing their mobilization. Plays a key role in embryonic stem cells (ESCs) by acting both as an positive and negative regulator of DNA methylation. While it promotes DNA methylation of housekeeping genes together with DNMT3A and DNMT3B, it also acts as an inhibitor of DNA methylation at the promoter of bivalent genes. Interacts with the EZH2 component of the PRC2/EED-EZH2 complex, preventing interaction of DNMT3A and DNMT3B with the PRC2/EED-EZH2 complex, leading to maintain low methylation levels at the promoters of bivalent genes. Promotes differentiation of ESCs into primordial germ cells by inhibiting DNA methylation at the promoter of RHOX5, thereby activating its expression. The protein is DNA (cytosine-5)-methyltransferase 3-like (Dnmt3l) of Mus musculus (Mouse).